We begin with the raw amino-acid sequence, 288 residues long: ATP synthase gamma chain (288 aa).

This sequence belongs to the ATPase gamma chain family. As to quaternary structure, F-type ATPases have 2 components, CF(1) - the catalytic core - and CF(0) - the membrane proton channel. CF(1) has five subunits: alpha(3), beta(3), gamma(1), delta(1), epsilon(1). CF(0) has three main subunits: a, b and c.

The protein resides in the cell membrane. In terms of biological role, produces ATP from ADP in the presence of a proton gradient across the membrane. The gamma chain is believed to be important in regulating ATPase activity and the flow of protons through the CF(0) complex. This is ATP synthase gamma chain from Macrococcus caseolyticus (strain JCSC5402) (Macrococcoides caseolyticum).